Here is a 396-residue protein sequence, read N- to C-terminus: Ornithine aminotransferase (396 aa).

Residue Lys-255 is modified to N6-(pyridoxal phosphate)lysine.

This sequence belongs to the class-III pyridoxal-phosphate-dependent aminotransferase family. OAT subfamily. The cofactor is pyridoxal 5'-phosphate.

Its subcellular location is the cytoplasm. It carries out the reaction a 2-oxocarboxylate + L-ornithine = L-glutamate 5-semialdehyde + an L-alpha-amino acid. It participates in amino-acid biosynthesis; L-proline biosynthesis; L-glutamate 5-semialdehyde from L-ornithine: step 1/1. Its function is as follows. Catalyzes the interconversion of ornithine to glutamate semialdehyde. In Bacillus anthracis (strain A0248), this protein is Ornithine aminotransferase.